The following is a 439-amino-acid chain: Glucose-6-phosphate 1-dehydrogenase (439 aa).

Lys100 is a binding site for NADP(+). The substrate site is built by His130, Lys134, Glu168, and Asp187. Catalysis depends on His192, which acts as the Proton acceptor. Lys288 is a substrate binding site.

This sequence belongs to the glucose-6-phosphate dehydrogenase family.

It catalyses the reaction D-glucose 6-phosphate + NADP(+) = 6-phospho-D-glucono-1,5-lactone + NADPH + H(+). Its pathway is carbohydrate degradation; pentose phosphate pathway; D-ribulose 5-phosphate from D-glucose 6-phosphate (oxidative stage): step 1/3. In terms of biological role, catalyzes the oxidation of glucose 6-phosphate to 6-phosphogluconolactone. The chain is Glucose-6-phosphate 1-dehydrogenase from Chlamydia trachomatis serovar D (strain ATCC VR-885 / DSM 19411 / UW-3/Cx).